The primary structure comprises 93 residues: Small ribosomal subunit protein uS19 (93 aa).

Disordered regions lie at residues 1-24 (MPRS…AQNE) and 73-93 (EFAP…GRRR). 2 stretches are compositionally biased toward basic and acidic residues: residues 9-21 (PFVD…KVDA) and 81-93 (KGHE…GRRR).

Belongs to the universal ribosomal protein uS19 family.

Protein S19 forms a complex with S13 that binds strongly to the 16S ribosomal RNA. The polypeptide is Small ribosomal subunit protein uS19 (Kineococcus radiotolerans (strain ATCC BAA-149 / DSM 14245 / SRS30216)).